A 425-amino-acid chain; its full sequence is Dihydroorotase (425 aa).

Zn(2+) is bound by residues His61 and His63. Substrate-binding positions include 63–65 (HLR) and Asn95. 4 residues coordinate Zn(2+): Lys146, His175, His224, and Asp293. N6-carboxylysine is present on Lys146. Asp293 is an active-site residue. Substrate contacts are provided by residues His297 and 311–312 (PG).

This sequence belongs to the metallo-dependent hydrolases superfamily. DHOase family. Class I DHOase subfamily. The cofactor is Zn(2+).

It catalyses the reaction (S)-dihydroorotate + H2O = N-carbamoyl-L-aspartate + H(+). Its pathway is pyrimidine metabolism; UMP biosynthesis via de novo pathway; (S)-dihydroorotate from bicarbonate: step 3/3. Its function is as follows. Catalyzes the reversible cyclization of carbamoyl aspartate to dihydroorotate. The sequence is that of Dihydroorotase from Aeropyrum pernix (strain ATCC 700893 / DSM 11879 / JCM 9820 / NBRC 100138 / K1).